The sequence spans 212 residues: Regulatory protein RecX (212 aa).

Belongs to the RecX family.

The protein localises to the cytoplasm. Its function is as follows. Modulates RecA activity. This chain is Regulatory protein RecX, found in Clostridium botulinum (strain Alaska E43 / Type E3).